The chain runs to 254 residues: tRNA (guanine-N(1)-)-methyltransferase (254 aa).

S-adenosyl-L-methionine is bound by residues G115 and 135 to 140; that span reads VGDFVL.

It belongs to the RNA methyltransferase TrmD family. As to quaternary structure, homodimer.

Its subcellular location is the cytoplasm. The enzyme catalyses guanosine(37) in tRNA + S-adenosyl-L-methionine = N(1)-methylguanosine(37) in tRNA + S-adenosyl-L-homocysteine + H(+). Functionally, specifically methylates guanosine-37 in various tRNAs. This chain is tRNA (guanine-N(1)-)-methyltransferase, found in Francisella tularensis subsp. tularensis (strain FSC 198).